The sequence spans 150 residues: UPF0178 protein Ssed_1350 (150 aa).

Belongs to the UPF0178 family.

This is UPF0178 protein Ssed_1350 from Shewanella sediminis (strain HAW-EB3).